We begin with the raw amino-acid sequence, 157 residues long: Rieske domain-containing protein (157 aa).

M1 is modified (N-acetylmethionine). Phosphoserine is present on S6. 2 consecutive Rieske domains span residues S16–G94 and S17–V131. [2Fe-2S] cluster contacts are provided by C57, H59, C80, and H83.

It depends on [2Fe-2S] cluster as a cofactor.

This chain is Rieske domain-containing protein (RFESD), found in Homo sapiens (Human).